Here is a 137-residue protein sequence, read N- to C-terminus: Putative pre-16S rRNA nuclease (137 aa).

Belongs to the YqgF nuclease family.

Its subcellular location is the cytoplasm. In terms of biological role, could be a nuclease involved in processing of the 5'-end of pre-16S rRNA. The polypeptide is Putative pre-16S rRNA nuclease (Bacillus cereus (strain AH187)).